The following is a 478-amino-acid chain: Alpha-1,3-mannosyl-glycoprotein 4-beta-N-acetylglucosaminyltransferase C (478 aa).

At 1–23 (MFKFHQMKHIFEILDKMRCLRKR) the chain is on the cytoplasmic side. Residues 24–44 (STVSFLGVLVIFLLFMNLYIE) traverse the membrane as a helical; Signal-anchor for type II membrane protein segment. The Lumenal portion of the chain corresponds to 45–478 (DSYVLEGDKQ…IIRSISIWTS (434 aa)). Residues N84 and N215 are each glycosylated (N-linked (GlcNAc...) asparagine).

It belongs to the glycosyltransferase 54 family. A divalent metal cation is required as a cofactor.

The protein localises to the golgi apparatus membrane. It catalyses the reaction N(4)-{beta-D-GlcNAc-(1-&gt;2)-alpha-D-Man-(1-&gt;3)-[beta-D-GlcNAc-(1-&gt;2)-alpha-D-Man-(1-&gt;6)]-beta-D-Man-(1-&gt;4)-beta-D-GlcNAc-(1-&gt;4)-beta-D-GlcNAc}-L-asparaginyl-[protein] + UDP-N-acetyl-alpha-D-glucosamine = N(4)-{beta-D-GlcNAc-(1-&gt;2)-[beta-D-GlcNAc-(1-&gt;4)]-alpha-D-Man-(1-&gt;3)-[beta-D-GlcNAc-(1-&gt;2)-alpha-D-Man-(1-&gt;6)]-beta-D-Man-(1-&gt;4)-beta-D-GlcNAc-(1-&gt;4)-beta-D-GlcNAc}-L-asparaginyl-[protein] + UDP + H(+). It participates in protein modification; protein glycosylation. Glycosyltransferase that participates in the transfer of N-acetylglucosamine (GlcNAc) to the core mannose residues of N-linked glycans. Catalyzes the formation of the GlcNAcbeta1-4 branch on the GlcNAcbeta1-2Manalpha1-3 arm of the core structure of N-linked glycans. Essential for the production of tri- and tetra-antennary N-linked sugar chains. Does not catalyze the transfer of GlcNAc to the Manalpha1-6 arm to form GlcNAcBeta1-4Manalpha1-6 linkage ('GnT-VI' activity). The chain is Alpha-1,3-mannosyl-glycoprotein 4-beta-N-acetylglucosaminyltransferase C (MGAT4C) from Macaca fascicularis (Crab-eating macaque).